Consider the following 405-residue polypeptide: Patatin-like protein 2 (405 aa).

The PNPLA domain occupies 24 to 230 (LSIDGGGVRG…AANNPTLCAM (207 aa)). Positions 28–33 (GGGVRG) match the GXGXXG motif. The short motif at 66-70 (GTSTG) is the GXSXG element. Ser-68 functions as the Nucleophile in the catalytic mechanism. The Proton acceptor role is filled by Asp-217. The DGA/G motif lies at 217–219 (DGG).

The protein belongs to the patatin family.

Its function is as follows. Possesses non-specific lipolytic acyl hydrolase (LAH) activity. Hydrolyzes phospholipids as well as galactolipids. May play a role in disease resistance. The sequence is that of Patatin-like protein 2 (PLP2) from Oryza sativa subsp. indica (Rice).